The sequence spans 362 residues: Probable branched-chain-amino-acid aminotransferase (362 aa).

Lysine 202 bears the N6-(pyridoxal phosphate)lysine mark.

This sequence belongs to the class-IV pyridoxal-phosphate-dependent aminotransferase family. It depends on pyridoxal 5'-phosphate as a cofactor.

It catalyses the reaction L-leucine + 2-oxoglutarate = 4-methyl-2-oxopentanoate + L-glutamate. The enzyme catalyses L-isoleucine + 2-oxoglutarate = (S)-3-methyl-2-oxopentanoate + L-glutamate. It carries out the reaction L-valine + 2-oxoglutarate = 3-methyl-2-oxobutanoate + L-glutamate. It participates in amino-acid biosynthesis; L-isoleucine biosynthesis; L-isoleucine from 2-oxobutanoate: step 4/4. It functions in the pathway amino-acid biosynthesis; L-leucine biosynthesis; L-leucine from 3-methyl-2-oxobutanoate: step 4/4. Its pathway is amino-acid biosynthesis; L-valine biosynthesis; L-valine from pyruvate: step 4/4. Functionally, acts on leucine, isoleucine and valine. This is Probable branched-chain-amino-acid aminotransferase (ilvE) from Streptomyces coelicolor (strain ATCC BAA-471 / A3(2) / M145).